We begin with the raw amino-acid sequence, 414 residues long: Tetraspanning orphan receptor (414 aa).

The Cytoplasmic portion of the chain corresponds to 1 to 28 (MPRASALLTSDPRHQFTCCLCLHVRTGT). A helical transmembrane segment spans residues 29–49 (IIFGITQIIIQLIFISFLFLM). Over 50-166 (TFNPRLFPED…EIKIRQFSPY (117 aa)) the chain is Extracellular. A helical membrane pass occupies residues 167-187 (IAVCVTTFSLAFCCFMVHGAI). The Cytoplasmic segment spans residues 188–194 (TRQPTHL). The chain crosses the membrane as a helical span at residues 195 to 215 (LPFFFIQVFDLIICLIHILGF). Over 216-241 (MSSTSDIRLMIHTKTGPIYIKSTGLA) the chain is Extracellular. A helical membrane pass occupies residues 242-262 (FIILSISCMMLAFKAYCLGMV). Residues 263–414 (WDCYKYLMLN…TSTPSNVHPC (152 aa)) are Cytoplasmic-facing. The segment at 306–328 (LTGNLDSANESNTRAHPDPVTYD) is disordered.

Interacts (via N-terminal extracellular domain) with human C2a. In terms of processing, phosphorylated on tyrosine residues.

The protein resides in the cell membrane. In terms of biological role, cell surface receptor that binds to human complement C2a protein. This results in inhibition of the classical and lectin pathways of complement activation, probably due to interference with binding of C2a to C4b and interference with cleavage by C1 or MASP2 such that C3 convertase cannot be formed. This infers resistance to complement-mediated cell lysis, allowing parasite survival and infection. The polypeptide is Tetraspanning orphan receptor (Schistosoma japonicum (Blood fluke)).